The sequence spans 805 residues: MQINENKGFPTEIPIIVEDELFLYPFMITPLFLSDEENLKALELAIQGETPILVVPTKPQQDGARDFDGIYDAGVIGTIMRRVPLPDGRVKVLFQGIDKGKILKQSGINPLRGIVDMLHVKRPSQVKTDALIVVLREKVRELSQFNHFFPPDLLKTIEESAEAVRVCDLVSSALRLKKQIAYSFFVEENLEQRLLKLIDYVIEEIEANKLQKEIKNKVHSKIDKTNKEYFLKEQLKQIQAELGADTSREEELEEYRKKLDAKKKFMAEDAYKEIKKQIDKLSRMHPDSADANTLQSYLDWVLEIPFENVAKKKSSIAEVSKHLNADHYSLEKPKERIEEYFALRELLELRGVGEKVNNGAILCFAGPPGVGKTSLANSIAKALKRELVRIALGGLEDVNELRGHRRTYIGAMPGRIVQGLIEAKQMNPVVVLDEIDKVGRSYRGDPTAVLLEILDPEQNNKFRDYYLNFNIDLSKIIFIATANDVSMIPAALRDRMEFIELSSYTPQEKFEIAKKYLLPQELKKHGLKPSDVSISKEALELIISDYTRESGVRNLRRRIADILRKVAKNILTKKNEGKISVTAKNLKEFLEKKVYEIEPADKKDQIGLVNGLAWTSVGGDVLRIEAIRIQGKGSMQITGQLGDVMKESAQIAFSVVKVLIDNKKLKVPMPIVPKFDDDKHKLEASDVYRRYDLHLHVPEGAVPKDGPSAGITMATAIASILTDTKVKHDIAMTGEITLTGRVLPIGGLKEKLIAAHKAGIKTALIPRKNYDRDLVDIPAEVKADMKIIAVDTIDDVLKNALVAKK.

The Lon N-terminal domain maps to 13–205 (IPIIVEDELF…KLIDYVIEEI (193 aa)). ATP is bound at residue 366–373 (GPPGVGKT). Positions 603 to 803 (KDQIGLVNGL…DDVLKNALVA (201 aa)) constitute a Lon proteolytic domain. Residues serine 708 and lysine 751 contribute to the active site.

This sequence belongs to the peptidase S16 family. As to quaternary structure, homohexamer. Organized in a ring with a central cavity.

It is found in the cytoplasm. The enzyme catalyses Hydrolysis of proteins in presence of ATP.. Functionally, ATP-dependent serine protease that mediates the selective degradation of mutant and abnormal proteins as well as certain short-lived regulatory proteins. Required for cellular homeostasis and for survival from DNA damage and developmental changes induced by stress. Degrades polypeptides processively to yield small peptide fragments that are 5 to 10 amino acids long. Binds to DNA in a double-stranded, site-specific manner. The sequence is that of Lon protease from Campylobacter concisus (strain 13826).